A 947-amino-acid polypeptide reads, in one-letter code: Serine-aspartate repeat-containing protein C (947 aa).

An N-terminal signal peptide occupies residues 1–50; sequence MNNKKTATNRKGMIPNRLNKFSIRKYSVGTASILVGTTLIFGLSGHEAKA. Residues 21-32 carry the YSIRK-G/S signaling motif motif; the sequence is FSIRKYSVGTAS. The disordered stretch occupies residues 51–164; it reads AEHTNGELNQ…STTPKTTTIK (114 aa). The tract at residues 51-495 is ligand binding A region; sequence AEHTNGELNQ…GSSTANGDQK (445 aa). Over residues 56 to 71 the composition is skewed to polar residues; the sequence is GELNQSKNETTAPSEN. A compositionally biased stretch (basic and acidic residues) spans 72–83; the sequence is KTTKKVDSRQLK. A compositionally biased stretch (polar residues) spans 84–155; the sequence is DNTQTATADQ…SNLTQAKDVS (72 aa). 2 CNA-B domains span residues 496-606 and 607-717; these read KYNL…YKTP and KYSL…EEET. The disordered stretch occupies residues 678–927; the sequence is TQTGTNTTED…NNSNNGTLFG (250 aa). Acidic residues-rich tracts occupy residues 685–695 and 712–886; these read TEDDKDADGGE and YYEE…DSDS. An LPXTG sorting signal motif is present at residues 910 to 914; the sequence is LPETG. Positions 912–927 are enriched in low complexity; the sequence is ETGSENNNSNNGTLFG. A Pentaglycyl murein peptidoglycan amidated threonine modification is found at Thr-913. Positions 914 to 947 are cleaved as a propeptide — removed by sortase; sequence GSENNNSNNGTLFGGLFAALGSLLLFGRRKKQNK.

It belongs to the serine-aspartate repeat-containing protein (SDr) family. Homodimerizes; via N2-Domain. Interacts with host NRXN1; this interaction mediates bacterial attachment to host cells.

It is found in the secreted. Its subcellular location is the cell wall. Cell surface-associated calcium-binding protein which plays an important role in adhesion and pathogenesis. Mediates interactions with components of the extracellular matrix such as host NRXN1 to promote bacterial adhesion. This chain is Serine-aspartate repeat-containing protein C (sdrC), found in Staphylococcus aureus (strain Newman).